A 367-amino-acid chain; its full sequence is Cobalt-precorrin-5B C(1)-methyltransferase (367 aa).

This sequence belongs to the CbiD family.

The enzyme catalyses Co-precorrin-5B + S-adenosyl-L-methionine = Co-precorrin-6A + S-adenosyl-L-homocysteine. The protein operates within cofactor biosynthesis; adenosylcobalamin biosynthesis; cob(II)yrinate a,c-diamide from sirohydrochlorin (anaerobic route): step 6/10. In terms of biological role, catalyzes the methylation of C-1 in cobalt-precorrin-5B to form cobalt-precorrin-6A. The sequence is that of Cobalt-precorrin-5B C(1)-methyltransferase from Leptospira interrogans serogroup Icterohaemorrhagiae serovar copenhageni (strain Fiocruz L1-130).